Here is a 426-residue protein sequence, read N- to C-terminus: Glutamate-1-semialdehyde 2,1-aminomutase (426 aa).

Lys265 carries the N6-(pyridoxal phosphate)lysine modification.

This sequence belongs to the class-III pyridoxal-phosphate-dependent aminotransferase family. HemL subfamily. In terms of assembly, homodimer. Requires pyridoxal 5'-phosphate as cofactor.

The protein resides in the cytoplasm. The catalysed reaction is (S)-4-amino-5-oxopentanoate = 5-aminolevulinate. The protein operates within porphyrin-containing compound metabolism; protoporphyrin-IX biosynthesis; 5-aminolevulinate from L-glutamyl-tRNA(Glu): step 2/2. This is Glutamate-1-semialdehyde 2,1-aminomutase from Shigella flexneri serotype 5b (strain 8401).